The primary structure comprises 153 residues: Large ribosomal subunit protein uL15 (153 aa).

Positions 1-42 (MKLNTIKPGIGSAKPKRRVGRGIGSGLGKTCGRGHKGQKSRA) are disordered. The span at 21-31 (RGIGSGLGKTC) shows a compositional bias: gly residues.

This sequence belongs to the universal ribosomal protein uL15 family. In terms of assembly, part of the 50S ribosomal subunit.

Binds to the 23S rRNA. In Nitrosomonas europaea (strain ATCC 19718 / CIP 103999 / KCTC 2705 / NBRC 14298), this protein is Large ribosomal subunit protein uL15.